The primary structure comprises 52 residues: Protein PROPEP890 (52 aa).

Residues 27-52 (PQADLPQTPNSQVRIVSRDLPRGGNY) form a disordered region. The segment covering 31–40 (LPQTPNSQVR) has biased composition (polar residues). Over residues 42–52 (VSRDLPRGGNY) the composition is skewed to basic and acidic residues.

As to expression, expressed in roots. Barely detected in flowers.

Its function is as follows. Produces a rapid alkalinization of the cellular media and the induction of defense-related genes, including chitinase 1b, chalcone synthase and CYP93A1. Not active in tobacco or Arabidopsis. The receptor for GmPep890 is probably different from the receptor for GmSubPep. The sequence is that of Protein PROPEP890 (PROPEP890) from Glycine max (Soybean).